The sequence spans 405 residues: 3-hydroxy-3-methylglutaryl-coenzyme A reductase (405 aa).

Active-site charge relay system residues include E101 and D305. H400 (proton donor) is an active-site residue.

This sequence belongs to the HMG-CoA reductase family. In terms of assembly, homodimer.

It localises to the cytoplasm. The enzyme catalyses (R)-mevalonate + 2 NADP(+) + CoA = (3S)-3-hydroxy-3-methylglutaryl-CoA + 2 NADPH + 2 H(+). Its pathway is metabolic intermediate biosynthesis; (R)-mevalonate biosynthesis; (R)-mevalonate from acetyl-CoA: step 3/3. With respect to regulation, is competitively inhibited by lovastatin (formerly called mevinolin). Lovastatin also blocks the growth of H.salinarum, and this effect is reversed by addition of mevalonate, indicating the critical role that the mevalonate pathway plays in isoprenoid biosynthesis by these archaea. In terms of biological role, catalyzes the NADPH-dependent reductive deacylation of (S)-3-hydroxy-3-methylglutaryl-CoA (HMG-CoA) to (R)-mevalonate. Cannot use NADH instead of NADPH. Functions in the mevalonate (MVA) pathway leading to isopentenyl diphosphate (IPP), a key precursor for the biosynthesis of isoprenoid compounds such as archaeal membrane lipids. This chain is 3-hydroxy-3-methylglutaryl-coenzyme A reductase (hmgA), found in Halobacterium salinarum (strain ATCC 29341 / DSM 671 / R1).